The following is a 2547-amino-acid chain: Piezo-type mechanosensitive ion channel component 1 (2547 aa).

At 1–12 (MEPHVLGAGLYW) the chain is on the cytoplasmic side. Residues 13-25 (LLLPCTLLAASLL) form a helical membrane-spanning segment. Residues 26–28 (RFN) are Extracellular-facing. The helical transmembrane segment at 29 to 44 (ALSLVYLLFLLLLPWL) threads the bilayer. Residues 45-58 (PGPSRHSIPGHTGR) are Cytoplasmic-facing. The chain crosses the membrane as a helical span at residues 59 to 81 (LLRALLCLSLLFLVAHLAFQICL). The Extracellular portion of the chain corresponds to 82-121 (HTVPHLDQFLGQNGSLWVKVSQHIGVTRLDLKDIFNTTRL). An N-linked (GlcNAc...) asparagine glycan is attached at asparagine 94. Residues 122-138 (VAPDLGVLLASSLCLGL) traverse the membrane as a helical segment. Topologically, residues 139-201 (CGRLTRKAGQ…ASRFRVTAHW (63 aa)) are cytoplasmic. A helical membrane pass occupies residues 202–221 (LLMTSGRTLVIVLLALAGIA). Residues 222-223 (HP) lie on the Extracellular side of the membrane. A helical membrane pass occupies residues 224–243 (SAFSSIYLVVFLAICTWWSC). Residues 244-254 (HFPLSPLGFNT) lie on the Cytoplasmic side of the membrane. A helical membrane pass occupies residues 255 to 275 (LCVMVSCFGAGHLICLYCYQT). Topologically, residues 276 to 316 (PFIQDMLPPGNIWARLFGLKNFVDLPNYSSPNALVLNTKHA) are extracellular. Residues 317 to 337 (WPIYVSPGILLLLYYTATSLL) form a helical membrane-spanning segment. Over 338-424 (KLHKSCPSEL…EMSPLHGLGH (87 aa)) the chain is Cytoplasmic. Residues 347–387 (LRKETPREDEEHELELDHLEPEPQARDATQGEMPMTTEPDL) are disordered. Residues 361 to 371 (ELDHLEPEPQA) show a composition bias toward basic and acidic residues. A helical membrane pass occupies residues 425–445 (LIMDQSYVCALIAMMVWSIMY). Over 446-447 (HS) the chain is Extracellular. The chain crosses the membrane as a helical span at residues 448–463 (WLTFVLLLWACLIWTV). Over 464-468 (RSRHQ) the chain is Cytoplasmic. Residues 469 to 491 (LAMLCSPCILLYGLTLCCLRYVW) form a helical membrane-spanning segment. At 492–518 (AMELPELPTTLGPVSLHQLGLEHTRYP) the chain is on the extracellular side. Residues 519 to 536 (CLDLGAMLLYLLTFWLLL) form a helical membrane-spanning segment. Residues 537–580 (RQFVKEKLLKKQKVPAALLEVTVADTEPTQTQTLLRSLGELVTG) lie on the Cytoplasmic side of the membrane. A helical membrane pass occupies residues 581 to 601 (IYVKYWIYVCAGMFIVVSFAG). A topological domain (extracellular) is located at residue arginine 602. A helical transmembrane segment spans residues 603–623 (LVVYKIVYMFLFLLCLTLFQV). Topologically, residues 624-633 (YYTLWRKLLR) are cytoplasmic. A helical transmembrane segment spans residues 634–655 (VFWWLVVAYTMLVLIAVYTFQF). Topologically, residues 656–685 (QDFPTYWRNLTGFTDEQLGDLGLEQFSVSE) are extracellular. The chain crosses the membrane as a helical span at residues 686–702 (LFSSILIPGFFLLACIL). Residues 703 to 811 (QLHYFHRPFM…RRLLELHVFK (109 aa)) are Cytoplasmic-facing. Serine 758 bears the Phosphoserine mark. Residues 812 to 823 (LVALYTVWVALK) traverse the membrane as a helical segment. At 824–826 (EVS) the chain is on the extracellular side. Residues 827 to 840 (VMNLLLVVLWAFAL) traverse the membrane as a helical segment. At 841–854 (PYPRFRPMASCLST) the chain is on the cytoplasmic side. A helical membrane pass occupies residues 855–869 (VWTCIIIVCKMLYQL). Over 870 to 921 (KIVNPHEYSSNCTEPFPNNTNLQPLEINQSLLYRGPVDPANWFGVRKGYPNL) the chain is Extracellular. A helical transmembrane segment spans residues 922–949 (GYIQNHLQILLLLVFEAVVYRRQEHYRR). Over 950–989 (QHQQAPLPAQAVCADGTRQRLDQDLLSCLKYFINFFFYKF) the chain is Cytoplasmic. A helical transmembrane segment spans residues 990–1005 (GLEICFLMAVNVIGQR). At 1006 to 1007 (MN) the chain is on the extracellular side. A helical transmembrane segment spans residues 1008 to 1023 (FMVILHGCWLVAILTR). The Cytoplasmic portion of the chain corresponds to 1024-1036 (RRREAIARLWPNY). Residues 1037-1052 (CLFLTLFLLYQYLLCL) form a helical membrane-spanning segment. Residues 1053–1091 (GMPPALCIDYPWRWSKAIPMNSALIKWLYLPDFFRAPNS) lie on the Extracellular side of the membrane. Residues 1092-1113 (TNLISDFLLLLCASQQWQVFSA) form a helical membrane-spanning segment. Topologically, residues 1114–1148 (ERTEEWQRMAGINTDHLEPLRGEPNPIPNFIHCRS) are cytoplasmic. A helical membrane pass occupies residues 1149-1175 (YLDMLKVAVFRYLFWLVLVVVFVAGAT). Topologically, residues 1176–1180 (RISIF) are extracellular. A helical transmembrane segment spans residues 1181-1199 (GLGYLLACFYLLLFGTTLL). Residues 1200-1212 (QKDTRAQLVLWDC) are Cytoplasmic-facing. Residues 1213 to 1231 (LILYNVTVIISKNMLSLLS) form a helical membrane-spanning segment. Topologically, residues 1232–1280 (CVFVEQMQSNFCWVIQLFSLVCTVKGYYDPKEMMTRDRDCLLPVEEAGI) are extracellular. Residues 1281 to 1297 (IWDSICFFFLLLQRRIF) form a helical membrane-spanning segment. At 1298 to 1656 (LSHYFLHVSA…ELLLDRRLHI (359 aa)) the chain is on the cytoplasmic side. Residues 1334–1365 (HRQIEEKSLAQLKRQMKRIRAKQEKYRQSQAS) are a coiled coil. 3 disordered regions span residues 1354–1396 (AKQE…RRQW), 1456–1480 (RRERARQERAEQLASGGDLNPDVEP), and 1567–1610 (TLSG…NTRS). Over residues 1361–1372 (QSQASRGQLQSK) the composition is skewed to polar residues. Residues 1376–1392 (DPSQEPGPDSPGGSSPP) show a composition bias toward low complexity. Phosphoserine is present on residues serine 1385 and serine 1390. Positions 1592 to 1610 (SSMTDDTSSPLSTGYNTRS) are enriched in polar residues. Phosphoserine occurs at positions 1627, 1631, and 1646. The chain crosses the membrane as a helical span at residues 1657 to 1700 (PELEEAERFEAQQGRTLRLLRAGYQCVAAHSELLCYFIIILNHM). Over 1701–1704 (VTAS) the chain is Extracellular. A helical membrane pass occupies residues 1705-1720 (AASLVLPVLVFLWAML). Residues 1721 to 1728 (TIPRPSKR) are Cytoplasmic-facing. The helical transmembrane segment at 1729 to 1747 (FWMTAIVFTEVMVVTKYLF) threads the bilayer. The Extracellular portion of the chain corresponds to 1748–1779 (QFGFFPWNSYVVLRRYENKPYFPPRILGLEKT). The helical transmembrane segment at 1780 to 1801 (DSYIKYDLVQLMALFFHRSQLL) threads the bilayer. The Cytoplasmic portion of the chain corresponds to 1802–1976 (CYGLWDHEED…HTKYRAATDV (175 aa)). Composition is skewed to basic and acidic residues over residues 1816-1837 (DHCRSSVKDREAKEEPEAKLES) and 1855-1880 (PRDHIQGKGSIRSKDVIQDPPEDLKP). A disordered region spans residues 1816-1931 (DHCRSSVKDR…RPRHTQEKSK (116 aa)). Over residues 1881–1894 (RHTRHISIRFRRRK) the composition is skewed to basic residues. Over residues 1912 to 1931 (GEGKETTERKRPRHTQEKSK) the composition is skewed to basic and acidic residues. Residues 1977 to 1996 (YALMFLADIVDIIIIIFGFW) form a helical membrane-spanning segment. At 1997–2016 (AFGKHSAATDIASSLSDDQV) the chain is on the extracellular side. A helical membrane pass occupies residues 2017-2033 (PQAFLFMLLVQFGTMVI). Residues 2034-2047 (DRALYLRKTVLGKL) lie on the Cytoplasmic side of the membrane. A helical membrane pass occupies residues 2048-2068 (AFQVVLVVAIHIWMFFILPAV). The Extracellular portion of the chain corresponds to 2069–2076 (TERMFSQN). Residues 2077 to 2092 (AVAQLWYFVKCIYFAL) traverse the membrane as a helical segment. At 2093 to 2192 (SAYQIRCGYP…KKKIVKYGMG (100 aa)) the chain is on the cytoplasmic side. The helical transmembrane segment at 2193–2213 (GLIILFLIAIIWFPLLFMSLI) threads the bilayer. The Extracellular segment spans residues 2214-2457 (RSVVGVVNQP…IFSDKVSPPS (244 aa)). A disulfide bond links cysteine 2437 and cysteine 2441. The helical transmembrane segment at 2458-2478 (LGFLAGYGIVGLYVSIVLVVG) threads the bilayer. Over 2479–2547 (KFVRGFFSEI…TMIKWTRERE (69 aa)) the chain is Cytoplasmic.

This sequence belongs to the PIEZO (TC 1.A.75) family. In terms of assembly, homotrimer; the homotrimer forms a propeller-shaped Piezo channel with a cation-ion conducting pore. Heterotrimeric interaction may occur between PIEZO1 and PIEZO2. Interacts with PKD2. Interacts with STOMl3. Interacts with TMC1, TMC2, PCDG15 and CIB2; the interaction may be part of the MET complex. Interacts with MDFIC (via C-terminus); the interaction prolongs Piezo channel inactivation. Interacts with MDFI (via C-terminus); the interaction prolongs Piezo channel inactivation. Expressed in bladder, colon, kidney and skin. Also expressed in bone marrow, liver, lung, spleen and erythrocytes (at protein level). Expressed in myoblasts (at protein level). Expressed in red blood cells. Expressed in cochlear inner and outer hair cells (IHCs and OHCs) and vestibular organ HCs.

Its subcellular location is the endoplasmic reticulum membrane. The protein localises to the endoplasmic reticulum-Golgi intermediate compartment membrane. It localises to the cell membrane. It is found in the cell projection. The protein resides in the lamellipodium membrane. The enzyme catalyses K(+)(in) = K(+)(out). It catalyses the reaction Na(+)(in) = Na(+)(out). The catalysed reaction is Ca(2+)(in) = Ca(2+)(out). It carries out the reaction Mg(2+)(in) = Mg(2+)(out). Its activity is regulated as follows. Regulated by auxillary subunits MDFIC and MDFI. Down-regulated by phosphatidylserines exposed on the cell surface. Divalent ions decrease the single-channel permeability of K(+). Pore-forming subunit of the mechanosensitive non-specific cation Piezo channel required for rapidly adapting mechanically activated (MA) currents and has a key role in sensing touch and tactile pain. Piezo channels are homotrimeric three-blade propeller-shaped structures that utilize a cap-motion and plug-and-latch mechanism to gate their ion-conducting pathways. Generates currents characterized by a linear current-voltage relationship that are sensitive to ruthenium red and gadolinium. Conductance to monovalent alkali ions is highest for K(+), intermediate for Na(+) and lowest for Li(+). Divalent ions except for Mn(2+) permeate the channel but more slowly than the monovalent ions and they also reduce K(+) currents. Plays a key role in epithelial cell adhesion by maintaining integrin activation through R-Ras recruitment to the ER, most probably in its activated state, and subsequent stimulation of calpain signaling. In inner ear hair cells, PIEZO1/2 subunits may constitute part of the mechanotransducer (MET) non-selective cation channel complex where they may act as pore-forming ion-conducting component in the complex. In the kidney, may contribute to the detection of intraluminal pressure changes and to urine flow sensing. Acts as a shear-stress sensor that promotes endothelial cell organization and alignment in the direction of blood flow through calpain activation. Plays a key role in blood vessel formation and vascular structure in both development and adult physiology. Acts as a sensor of phosphatidylserine (PS) flipping at the plasma membrane and governs morphogenesis of muscle cells. In myoblasts, flippase-mediated PS enrichment at the inner leaflet of plasma membrane triggers channel activation and Ca(2+) influx followed by Rho GTPases signal transduction, leading to assembly of cortical actomyosin fibers and myotube formation. In Mus musculus (Mouse), this protein is Piezo-type mechanosensitive ion channel component 1.